The primary structure comprises 375 residues: 23S rRNA (uracil(747)-C(5))-methyltransferase RlmC (375 aa).

The [4Fe-4S] cluster site is built by Cys-3, Cys-11, Cys-14, and Cys-87. 4 residues coordinate S-adenosyl-L-methionine: Gln-212, Phe-241, Glu-262, and Asn-307. Cys-334 acts as the Nucleophile in catalysis.

The protein belongs to the class I-like SAM-binding methyltransferase superfamily. RNA M5U methyltransferase family. RlmC subfamily.

It carries out the reaction uridine(747) in 23S rRNA + S-adenosyl-L-methionine = 5-methyluridine(747) in 23S rRNA + S-adenosyl-L-homocysteine + H(+). Its function is as follows. Catalyzes the formation of 5-methyl-uridine at position 747 (m5U747) in 23S rRNA. This is 23S rRNA (uracil(747)-C(5))-methyltransferase RlmC from Escherichia coli O139:H28 (strain E24377A / ETEC).